We begin with the raw amino-acid sequence, 588 residues long: Neopullulanase (588 aa).

The Ca(2+) site is built by N147, N149, S153, G172, and D174. Residues H247 and R326 each coordinate substrate. D328 acts as the Nucleophile in catalysis. E357 functions as the Proton donor in the catalytic mechanism. Residues 423–424 (HD), D468, and R472 contribute to the substrate site.

The protein belongs to the glycosyl hydrolase 13 family. In terms of assembly, homodimer. It depends on Ca(2+) as a cofactor.

The enzyme catalyses Hydrolysis of pullulan to panose (6-alpha-D-glucosylmaltose).. In terms of biological role, hydrolyzes pullulan efficiently but only a small amount of starch. Endohydrolysis of 1,4-alpha-glucosidic linkages in pullulan to form panose. Also cleaves (1-6)-alpha-glucosidic linkages to form maltotriose. This is Neopullulanase (nplT) from Geobacillus stearothermophilus (Bacillus stearothermophilus).